Here is a 277-residue protein sequence, read N- to C-terminus: Thiazole synthase (277 aa).

Lysine 118 (schiff-base intermediate with DXP) is an active-site residue. Residues glycine 179, 205 to 206, and 227 to 228 each bind 1-deoxy-D-xylulose 5-phosphate; these read AG and NT.

This sequence belongs to the ThiG family. In terms of assembly, homotetramer. Forms heterodimers with either ThiH or ThiS.

It localises to the plastid. Its subcellular location is the chloroplast. The catalysed reaction is [ThiS sulfur-carrier protein]-C-terminal-Gly-aminoethanethioate + 2-iminoacetate + 1-deoxy-D-xylulose 5-phosphate = [ThiS sulfur-carrier protein]-C-terminal Gly-Gly + 2-[(2R,5Z)-2-carboxy-4-methylthiazol-5(2H)-ylidene]ethyl phosphate + 2 H2O + H(+). The protein operates within cofactor biosynthesis; thiamine diphosphate biosynthesis. Functionally, catalyzes the rearrangement of 1-deoxy-D-xylulose 5-phosphate (DXP) to produce the thiazole phosphate moiety of thiamine. Sulfur is provided by the thiocarboxylate moiety of the carrier protein ThiS. In vitro, sulfur can be provided by H(2)S. This Emiliania huxleyi (Coccolithophore) protein is Thiazole synthase.